A 759-amino-acid polypeptide reads, in one-letter code: Tripartite motif-containing protein 46 (759 aa).

The required for proximal axon localization, axon formation and migration stretch occupies residues 1–166 (MAEGEDMQTF…VERYRQSVSV (166 aa)). The RING-type 1; degenerate zinc-finger motif lies at 33-59 (CPVCQEMYKQPLVLPCTHNVCQACARE). The tract at residues 67-98 (IGHGGDPSSEPTSPASTPSTRSPRLSRRTLPK) is disordered. The segment covering 73–89 (PSSEPTSPASTPSTRSP) has biased composition (low complexity). An RING-type 2; degenerate zinc finger spans residues 172-231 (CQLCKPPPLEATKGCTECRATFCNECFKLFHPWGTQKAQHEPTLPTLSFRPKGLMCPDHK). A B box-type zinc finger spans residues 222 to 263 (PKGLMCPDHKEEVTHYCKTCQRLVCQLCRVRRTHSGHKITPV). 4 residues coordinate Zn(2+): cysteine 227, histidine 230, cysteine 249, and histidine 255. The stretch at 322 to 400 (AVLEEKRASL…RATEALQTFR (79 aa)) forms a coiled coil. Serine 330 bears the Phosphoserine mark. The 58-residue stretch at 370–427 (LKETDQPCFVQAAKQLHNRIARATEALQTFRPAASSSFRHCQLDVGREMKLLTELSFL) folds into the COS domain. The tract at residues 411-429 (QLDVGREMKLLTELSFLRV) is required for microtubule association, proximal axon localization and axon formation. A Fibronectin type-III domain is found at 429–528 (VPEAPVIDTQ…EDVHLHTPPA (100 aa)). Residues 526–747 (PPAPVLHFFL…LQEPVGTKPE (222 aa)) form the B30.2/SPRY domain. Phosphoserine is present on serine 627.

Belongs to the TRIM/RBCC family. Interacts with TUBB3 and TUBA4A. In terms of tissue distribution, expressed in the central nervous system, including pyramidal neurons and interneurons in the cortex and hippocampus and all neuronal cell types in the cerebral and cerebellar cortex, and in the peripheral nervous system, including the dorsal root ganglion neurons.

The protein resides in the cell projection. The protein localises to the axon. It localises to the cytoplasm. It is found in the cytoskeleton. Its function is as follows. Microtubule-associated protein that is involved in the formation of parallel microtubule bundles linked by cross-bridges in the proximal axon. Required for the uniform orientation and maintenance of the parallel microtubule fascicles, which are important for efficient cargo delivery and trafficking in axons. Thereby also required for proper axon formation, the establishment of neuronal polarity and proper neuronal migration. The sequence is that of Tripartite motif-containing protein 46 (Trim46) from Mus musculus (Mouse).